A 693-amino-acid chain; its full sequence is DNA ligase (693 aa).

NAD(+)-binding positions include 35–39 (DAEYD), 84–85 (SI), and E121. K123 (N6-AMP-lysine intermediate) is an active-site residue. 4 residues coordinate NAD(+): R144, E180, K297, and K321. Zn(2+) contacts are provided by C418, C421, C436, and C442. In terms of domain architecture, BRCT spans 601–690 (PASGSVAGLT…EQSPINNKDG (90 aa)).

It belongs to the NAD-dependent DNA ligase family. LigA subfamily. The cofactor is Mg(2+). It depends on Mn(2+) as a cofactor.

The enzyme catalyses NAD(+) + (deoxyribonucleotide)n-3'-hydroxyl + 5'-phospho-(deoxyribonucleotide)m = (deoxyribonucleotide)n+m + AMP + beta-nicotinamide D-nucleotide.. Functionally, DNA ligase that catalyzes the formation of phosphodiester linkages between 5'-phosphoryl and 3'-hydroxyl groups in double-stranded DNA using NAD as a coenzyme and as the energy source for the reaction. It is essential for DNA replication and repair of damaged DNA. This is DNA ligase from Azoarcus sp. (strain BH72).